Reading from the N-terminus, the 318-residue chain is Ribosomal RNA small subunit methyltransferase H (318 aa).

S-adenosyl-L-methionine is bound by residues 38-40 (AGH), Asp-57, Leu-91, Asp-105, and Gln-112.

This sequence belongs to the methyltransferase superfamily. RsmH family.

The protein resides in the cytoplasm. It carries out the reaction cytidine(1402) in 16S rRNA + S-adenosyl-L-methionine = N(4)-methylcytidine(1402) in 16S rRNA + S-adenosyl-L-homocysteine + H(+). Its function is as follows. Specifically methylates the N4 position of cytidine in position 1402 (C1402) of 16S rRNA. The sequence is that of Ribosomal RNA small subunit methyltransferase H from Clavibacter michiganensis subsp. michiganensis (strain NCPPB 382).